A 594-amino-acid chain; its full sequence is UvrABC system protein C (594 aa).

One can recognise a GIY-YIG domain in the interval 13-99 (NSSGVYQYFD…IKQLKPKYNI (87 aa)). The 36-residue stretch at 205-240 (DRLIKELELKMERLSSNLRFEEALIYRDRIAKIQKI) folds into the UVR domain.

This sequence belongs to the UvrC family. As to quaternary structure, interacts with UvrB in an incision complex.

Its subcellular location is the cytoplasm. In terms of biological role, the UvrABC repair system catalyzes the recognition and processing of DNA lesions. UvrC both incises the 5' and 3' sides of the lesion. The N-terminal half is responsible for the 3' incision and the C-terminal half is responsible for the 5' incision. The chain is UvrABC system protein C from Helicobacter pylori (strain G27).